A 156-amino-acid polypeptide reads, in one-letter code: Small ribosomal subunit protein uS7 (156 aa).

Belongs to the universal ribosomal protein uS7 family. Part of the 30S ribosomal subunit. Contacts proteins S9 and S11.

Functionally, one of the primary rRNA binding proteins, it binds directly to 16S rRNA where it nucleates assembly of the head domain of the 30S subunit. Is located at the subunit interface close to the decoding center, probably blocks exit of the E-site tRNA. The polypeptide is Small ribosomal subunit protein uS7 (Onion yellows phytoplasma (strain OY-M)).